Consider the following 378-residue polypeptide: Chorismate synthase (378 aa).

Arg50 is an NADP(+) binding site. Residues 127–129 (RAS), 255–256 (NA), Gly300, 315–319 (KPTPS), and Arg342 contribute to the FMN site.

It belongs to the chorismate synthase family. The cofactor is FMNH2.

It catalyses the reaction 5-O-(1-carboxyvinyl)-3-phosphoshikimate = chorismate + phosphate. It participates in metabolic intermediate biosynthesis; chorismate biosynthesis; chorismate from D-erythrose 4-phosphate and phosphoenolpyruvate: step 7/7. Its function is as follows. Catalyzes the anti-1,4-elimination of the C-3 phosphate and the C-6 proR hydrogen from 5-enolpyruvylshikimate-3-phosphate (EPSP) to yield chorismate, which is the branch point compound that serves as the starting substrate for the three terminal pathways of aromatic amino acid biosynthesis. This reaction introduces a second double bond into the aromatic ring system. In Methanocaldococcus jannaschii (strain ATCC 43067 / DSM 2661 / JAL-1 / JCM 10045 / NBRC 100440) (Methanococcus jannaschii), this protein is Chorismate synthase.